The sequence spans 86 residues: Small ribosomal subunit protein bS16 (86 aa).

It belongs to the bacterial ribosomal protein bS16 family.

The chain is Small ribosomal subunit protein bS16 from Borrelia garinii subsp. bavariensis (strain ATCC BAA-2496 / DSM 23469 / PBi) (Borreliella bavariensis).